A 209-amino-acid chain; its full sequence is Thiamine-phosphate synthase 1 (209 aa).

4-amino-2-methyl-5-(diphosphooxymethyl)pyrimidine contacts are provided by residues 39-43 (QFREK) and Asn-74. Residues Asp-75 and Asp-94 each contribute to the Mg(2+) site. Ser-112 provides a ligand contact to 4-amino-2-methyl-5-(diphosphooxymethyl)pyrimidine. 138–140 (TQS) is a binding site for 2-[(2R,5Z)-2-carboxy-4-methylthiazol-5(2H)-ylidene]ethyl phosphate. Lys-141 is a 4-amino-2-methyl-5-(diphosphooxymethyl)pyrimidine binding site. 2-[(2R,5Z)-2-carboxy-4-methylthiazol-5(2H)-ylidene]ethyl phosphate is bound by residues Gly-170 and 190-191 (IS).

It belongs to the thiamine-phosphate synthase family. Mg(2+) serves as cofactor.

The catalysed reaction is 2-[(2R,5Z)-2-carboxy-4-methylthiazol-5(2H)-ylidene]ethyl phosphate + 4-amino-2-methyl-5-(diphosphooxymethyl)pyrimidine + 2 H(+) = thiamine phosphate + CO2 + diphosphate. The enzyme catalyses 2-(2-carboxy-4-methylthiazol-5-yl)ethyl phosphate + 4-amino-2-methyl-5-(diphosphooxymethyl)pyrimidine + 2 H(+) = thiamine phosphate + CO2 + diphosphate. It carries out the reaction 4-methyl-5-(2-phosphooxyethyl)-thiazole + 4-amino-2-methyl-5-(diphosphooxymethyl)pyrimidine + H(+) = thiamine phosphate + diphosphate. Its pathway is cofactor biosynthesis; thiamine diphosphate biosynthesis; thiamine phosphate from 4-amino-2-methyl-5-diphosphomethylpyrimidine and 4-methyl-5-(2-phosphoethyl)-thiazole: step 1/1. Condenses 4-methyl-5-(beta-hydroxyethyl)thiazole monophosphate (THZ-P) and 2-methyl-4-amino-5-hydroxymethyl pyrimidine pyrophosphate (HMP-PP) to form thiamine monophosphate (TMP). The protein is Thiamine-phosphate synthase 1 of Streptococcus pneumoniae serotype 4 (strain ATCC BAA-334 / TIGR4).